Here is a 147-residue protein sequence, read N- to C-terminus: Hemoglobin subunit beta-1 (147 aa).

The region spanning 3–147 (KWSKTELTII…VVSALGKQYH (145 aa)) is the Globin domain. 2 residues coordinate heme b: histidine 64 and histidine 93.

The protein belongs to the globin family. In terms of assembly, hb1 is a heterotetramer of two alpha chains and two beta-1 chains. Red blood cells.

Involved in oxygen transport from gills to the various peripheral tissues. The chain is Hemoglobin subunit beta-1 (hbb1) from Cygnodraco mawsoni (Antarctic dragonfish).